Consider the following 244-residue polypeptide: B3 domain-containing protein At2g36080 (244 aa).

Positions F38–G144 form a DNA-binding region, TF-B3.

The protein localises to the nucleus. The sequence is that of B3 domain-containing protein At2g36080 (ARF31) from Arabidopsis thaliana (Mouse-ear cress).